Reading from the N-terminus, the 524-residue chain is Rho guanine nucleotide exchange factor 3 (524 aa).

Residues serine 46 and serine 69 each carry the phosphoserine modification. In terms of domain architecture, DH spans 121–303 (KRQEAIFELS…QGIVAEINTK (183 aa)). Positions 290–448 (INIIQGIVAE…WLNCIRQAKE (159 aa)) constitute a PH domain. The interval 461 to 524 (DSEGLVQGPG…CANSRPEESV (64 aa)) is disordered. Over residues 472–484 (ENREPQGETKLEQ) the composition is skewed to basic and acidic residues.

In terms of assembly, interacts with RHOA and RHOB.

The protein localises to the cytoplasm. In terms of biological role, acts as a guanine nucleotide exchange factor (GEF) for RhoA and RhoB GTPases. The chain is Rho guanine nucleotide exchange factor 3 (Arhgef3) from Mus musculus (Mouse).